Reading from the N-terminus, the 107-residue chain is uncharacterized protein (107 aa).

The helical transmembrane segment at 37 to 59 threads the bilayer; the sequence is MVFSFLTVMPGDFIKCLFLRFFV.

It localises to the membrane. This is an uncharacterized protein from Saccharomyces cerevisiae (strain ATCC 204508 / S288c) (Baker's yeast).